Consider the following 217-residue polypeptide: uncharacterized protein (217 aa).

6 consecutive transmembrane segments (helical) span residues Ile13–Leu35, Phe50–Leu68, Phe75–Ile94, Met109–Leu131, Tyr152–Val174, and Gly194–Leu216.

It localises to the cell membrane. This is an uncharacterized protein from Archaeoglobus fulgidus (strain ATCC 49558 / DSM 4304 / JCM 9628 / NBRC 100126 / VC-16).